The following is a 182-amino-acid chain: MFVLAIVFAFVFIPSSSSVTCDFKNELVSMNWNVKNNKIQIHFEHNNLTENRWTSIAFGDGPGMNNLESIIFSRREDNVITTNSGYTPKKKKVVVDDVSYVTVNDVQITGNKLKVTVSRPLGPAGPRNFSLDQCLNWMVVPGGSLSNGKFKKHHGKIFFIKDVCAAKCTAERIQRINSNKAL.

Positions 1–18 are cleaved as a signal peptide; that stretch reads MFVLAIVFAFVFIPSSSS. Positions 26–143 constitute a DOMON domain; sequence ELVSMNWNVK…CLNWMVVPGG (118 aa). Residues N47 and N128 are each glycosylated (N-linked (GlcNAc...) asparagine).

It localises to the secreted. The protein is DOMON domain-containing protein Y73F4A.1 of Caenorhabditis elegans.